The following is a 164-amino-acid chain: Ecotin (164 aa).

Positions 1–20 (MKMFVPAVVFAALASASAWA) are cleaved as a signal peptide. A disulfide bridge links Cys-72 with Cys-109.

The protein belongs to the protease inhibitor I11 (ecotin) family. In terms of assembly, homodimer.

It is found in the periplasm. Its function is as follows. General inhibitor of pancreatic serine proteases: inhibits chymotrypsin, trypsin, elastases, factor X, kallikrein as well as a variety of other proteases. In Salmonella paratyphi A (strain ATCC 9150 / SARB42), this protein is Ecotin.